A 257-amino-acid chain; its full sequence is uncharacterized protein (257 aa).

2 disordered regions span residues Met1–Cys164 and Thr225–Ala257. The segment covering Cys10–Lys28 has biased composition (basic and acidic residues). A compositionally biased stretch (basic residues) spans Arg54–Ser65. A compositionally biased stretch (pro residues) spans Arg125–Ala139. Residues Arg144–Gly162 show a composition bias toward basic residues.

This is an uncharacterized protein from Homo sapiens (Human).